A 298-amino-acid chain; its full sequence is Putative enoyl-CoA reductase (298 aa).

The next 4 helical transmembrane spans lie at 162 to 182 (CVYYWTFALGIGYALCSPYYT), 189 to 209 (LVNASAVAMVIFELLNFAVHV), 229 to 249 (ILFSLVSCPNYLFEILSWVAF), and 254 to 274 (SMLTSWGFTFAGLVQMAEWAV).

The protein belongs to the steroid 5-alpha reductase family.

It localises to the membrane. It participates in lipid metabolism; fatty acid biosynthesis. Functionally, involved in the synthesis of fatty acids. The polypeptide is Putative enoyl-CoA reductase (Trypanosoma brucei brucei (strain 927/4 GUTat10.1)).